Consider the following 243-residue polypeptide: Ubiquinone/menaquinone biosynthesis C-methyltransferase UbiE (243 aa).

S-adenosyl-L-methionine is bound by residues threonine 69, aspartate 90, and 116–117 (DA).

It belongs to the class I-like SAM-binding methyltransferase superfamily. MenG/UbiE family.

The enzyme catalyses a 2-demethylmenaquinol + S-adenosyl-L-methionine = a menaquinol + S-adenosyl-L-homocysteine + H(+). It carries out the reaction a 2-methoxy-6-(all-trans-polyprenyl)benzene-1,4-diol + S-adenosyl-L-methionine = a 5-methoxy-2-methyl-3-(all-trans-polyprenyl)benzene-1,4-diol + S-adenosyl-L-homocysteine + H(+). Its pathway is quinol/quinone metabolism; menaquinone biosynthesis; menaquinol from 1,4-dihydroxy-2-naphthoate: step 2/2. It functions in the pathway cofactor biosynthesis; ubiquinone biosynthesis. Methyltransferase required for the conversion of demethylmenaquinol (DMKH2) to menaquinol (MKH2) and the conversion of 2-polyprenyl-6-methoxy-1,4-benzoquinol (DDMQH2) to 2-polyprenyl-3-methyl-6-methoxy-1,4-benzoquinol (DMQH2). In Burkholderia cenocepacia (strain ATCC BAA-245 / DSM 16553 / LMG 16656 / NCTC 13227 / J2315 / CF5610) (Burkholderia cepacia (strain J2315)), this protein is Ubiquinone/menaquinone biosynthesis C-methyltransferase UbiE.